A 173-amino-acid polypeptide reads, in one-letter code: Protein tyrosine phosphatase type IVA 1 (173 aa).

A Tyrosine-protein phosphatase domain is found at 8-161 (APVEVTYKNM…YRPKMRLRFK (154 aa)). Cys-49 and Cys-104 form a disulfide bridge. Asp-72 (proton donor) is an active-site residue. The interval 97–132 (GCCIAVHCVAGLGRAPVLVALALIEGGMKYEDAVQF) is interaction with ATF5. The Phosphocysteine intermediate role is filled by Cys-104. Position 105-110 (105-110 (VAGLGR)) interacts with phosphate. Residue Arg-110 coordinates substrate. Cys-170 carries the post-translational modification Cysteine methyl ester. Residue Cys-170 is the site of S-farnesyl cysteine attachment. The propeptide at 171 to 173 (CIQ) is removed in mature form.

This sequence belongs to the protein-tyrosine phosphatase family. As to quaternary structure, homotrimer. Interacts with ATF5. Interacts with tubulin. Farnesylated. Farnesylation is required for membrane targeting. Unfarnesylated forms are shifted into the nucleus. In terms of tissue distribution, expressed in bone marrow, lymph nodes, T lymphocytes, spleen, thymus and tonsil. Overexpressed in tumor cell lines.

Its subcellular location is the cell membrane. It is found in the early endosome. The protein localises to the endoplasmic reticulum. The protein resides in the cytoplasm. It localises to the cytoskeleton. Its subcellular location is the spindle. It is found in the nucleus. It carries out the reaction O-phospho-L-tyrosyl-[protein] + H2O = L-tyrosyl-[protein] + phosphate. Inhibited by sodium orthovanadate and pentamidine. In terms of biological role, protein tyrosine phosphatase which stimulates progression from G1 into S phase during mitosis. May play a role in the development and maintenance of differentiating epithelial tissues. Enhances cell proliferation, cell motility and invasive activity, and promotes cancer metastasis. The protein is Protein tyrosine phosphatase type IVA 1 (PTP4A1) of Homo sapiens (Human).